Here is a 156-residue protein sequence, read N- to C-terminus: Probable histone H2A.6 (156 aa).

2 disordered regions span residues 1–26 and 129–156; these read MDVG…KKPV and KKTA…QARS. Positions 9–26 are enriched in basic residues; sequence AAKKAVGRKLGGPKKKPV. The span at 130–147 shows a compositional bias: basic and acidic residues; sequence KTAEKADKPAKASKDKAA. The SPKK motif signature appears at 149 to 152; the sequence is SPKK.

This sequence belongs to the histone H2A family. As to quaternary structure, the nucleosome is a histone octamer containing two molecules each of H2A, H2B, H3 and H4 assembled in one H3-H4 heterotetramer and two H2A-H2B heterodimers. The octamer wraps approximately 147 bp of DNA.

Its subcellular location is the nucleus. The protein localises to the chromosome. Its function is as follows. Core component of nucleosome. Nucleosomes wrap and compact DNA into chromatin, limiting DNA accessibility to the cellular machineries which require DNA as a template. Histones thereby play a central role in transcription regulation, DNA repair, DNA replication and chromosomal stability. DNA accessibility is regulated via a complex set of post-translational modifications of histones, also called histone code, and nucleosome remodeling. This is Probable histone H2A.6 from Oryza sativa subsp. indica (Rice).